A 312-amino-acid polypeptide reads, in one-letter code: Very-long-chain 3-oxoacyl-CoA reductase-like protein At1g24470 (312 aa).

A helical membrane pass occupies residues Leu14–Leu34. Gly52–Leu81 contributes to the NADP(+) binding site. Ser190 lines the substrate pocket. Catalysis depends on Tyr205, which acts as the Proton acceptor.

The protein belongs to the short-chain dehydrogenases/reductases (SDR) family. As to expression, expressed in green siliques, flowers, inflorescence stems and leaves. Not detected in roots.

The protein localises to the endoplasmic reticulum membrane. Its function is as follows. Probable reductase, but unlike KCR1, has no beta-ketoacyl-coenzyme A reductase activity. This chain is Very-long-chain 3-oxoacyl-CoA reductase-like protein At1g24470 (KCR2), found in Arabidopsis thaliana (Mouse-ear cress).